Consider the following 89-residue polypeptide: Large ribosomal subunit protein bL31B (89 aa).

This sequence belongs to the bacterial ribosomal protein bL31 family. Type B subfamily. In terms of assembly, part of the 50S ribosomal subunit.

This chain is Large ribosomal subunit protein bL31B, found in Haemophilus ducreyi (strain 35000HP / ATCC 700724).